We begin with the raw amino-acid sequence, 107 residues long: Iron-sulfur cluster assembly protein CyaY (107 aa).

This sequence belongs to the frataxin family.

In terms of biological role, involved in iron-sulfur (Fe-S) cluster assembly. May act as a regulator of Fe-S biogenesis. The polypeptide is Iron-sulfur cluster assembly protein CyaY (Neisseria meningitidis serogroup B (strain ATCC BAA-335 / MC58)).